A 1405-amino-acid polypeptide reads, in one-letter code: DNA-directed RNA polymerase subunit beta' (1405 aa).

Residues Cys-71, Cys-73, Cys-86, and Cys-89 each contribute to the Zn(2+) site. 3 residues coordinate Mg(2+): Asp-462, Asp-464, and Asp-466. Zn(2+) contacts are provided by Cys-810, Cys-884, Cys-891, and Cys-894.

The protein belongs to the RNA polymerase beta' chain family. As to quaternary structure, the RNAP catalytic core consists of 2 alpha, 1 beta, 1 beta' and 1 omega subunit. When a sigma factor is associated with the core the holoenzyme is formed, which can initiate transcription. It depends on Mg(2+) as a cofactor. Zn(2+) serves as cofactor.

It catalyses the reaction RNA(n) + a ribonucleoside 5'-triphosphate = RNA(n+1) + diphosphate. DNA-dependent RNA polymerase catalyzes the transcription of DNA into RNA using the four ribonucleoside triphosphates as substrates. This is DNA-directed RNA polymerase subunit beta' from Maricaulis maris (strain MCS10) (Caulobacter maris).